Consider the following 369-residue polypeptide: Superinfection exclusion protein (369 aa).

The signal sequence occupies residues Met1–Thr15.

It belongs to the serpin family. Orthopoxvirus OPG040 subfamily. As to quaternary structure, interacts with OPG185/A56 protein.

It is found in the virion membrane. The protein localises to the host cell membrane. Functionally, negatively regulates superinfection and syncytium formation in infected host cells. Acts in concert with OPG185/A56 protein at the host cell membrane by interacting with and inhibiting the mature virion entry/fusion complex (EFC). This mechanism ensures that new virions released from the cell cannot enter already infected cells. The protein is Superinfection exclusion protein (OPG040) of Vaccinia virus (strain Western Reserve) (VACV).